The primary structure comprises 361 residues: Alanine racemase (361 aa).

Lys-35 (proton acceptor; specific for D-alanine) is an active-site residue. Position 35 is an N6-(pyridoxal phosphate)lysine (Lys-35). Arg-130 serves as a coordination point for substrate. Tyr-257 functions as the Proton acceptor; specific for L-alanine in the catalytic mechanism. Position 305 (Met-305) interacts with substrate.

This sequence belongs to the alanine racemase family. It depends on pyridoxal 5'-phosphate as a cofactor.

It carries out the reaction L-alanine = D-alanine. Its pathway is amino-acid biosynthesis; D-alanine biosynthesis; D-alanine from L-alanine: step 1/1. In terms of biological role, catalyzes the interconversion of L-alanine and D-alanine. May also act on other amino acids. In Nitrosomonas eutropha (strain DSM 101675 / C91 / Nm57), this protein is Alanine racemase (alr).